The primary structure comprises 295 residues: MTNIKNTFGNKFIGAHVSAAGGVDQAPLRAREIGANAFALFTKNQRQWVAKPLEEKTISAFKANCKMLGFGAEHILPHDSYLINLGAPEEEKLNKSRAAFIDEMERCNQLGLTLLNFHPGSHLKKVSEQECLATIAESINLAHKAVPNVIAVIENTAGQGTNLGWKFEHLAEIIDQVENKERVGVCLDTCHTFTAGYDLRTKEDCEHTFAEFDRVVGMHYLRAMHLNDSKVEFASKVDRHHSLGKGEIGWSCFEYIAKDPRFDGIPLILETIDPDIWQQEINTLRKFHIEEIANS.

H78, H118, E154, D188, H191, H225, D238, H240, and E270 together coordinate Zn(2+).

It belongs to the AP endonuclease 2 family. Zn(2+) is required as a cofactor.

It carries out the reaction Endonucleolytic cleavage to 5'-phosphooligonucleotide end-products.. Endonuclease IV plays a role in DNA repair. It cleaves phosphodiester bonds at apurinic or apyrimidinic (AP) sites, generating a 3'-hydroxyl group and a 5'-terminal sugar phosphate. In Vibrio campbellii (strain ATCC BAA-1116), this protein is Probable endonuclease 4.